The following is a 435-amino-acid chain: Monodehydroascorbate reductase 2 (435 aa).

Residues 14–17 (GGVA), Glu41, Arg48, Lys53, Ile96, and 147–148 (RE) contribute to the FAD site. NAD(+) contacts are provided by residues 172–178 (GGYIGLE), Glu196, Arg202, and Gly261. An NADP(+)-binding site is contributed by 174 to 178 (YIGLE). NADP(+) contacts are provided by Arg202 and Gly261. Residue Asp298 coordinates FAD. 314-315 (EH) provides a ligand contact to NAD(+). 314–315 (EH) contacts NADP(+). Residue Val316 participates in FAD binding. An L-ascorbate-binding site is contributed by Arg320. Residue Tyr349 coordinates FAD. Residue Tyr349 coordinates NAD(+). Tyr349 is a binding site for NADP(+). Residue Arg351 participates in L-ascorbate binding. Ser417 carries the post-translational modification Phosphoserine.

The protein belongs to the FAD-dependent oxidoreductase family. FAD serves as cofactor.

It is found in the cytoplasm. The catalysed reaction is 2 monodehydro-L-ascorbate radical + NADH + H(+) = 2 L-ascorbate + NAD(+). In terms of biological role, catalyzes the conversion of monodehydroascorbate to ascorbate, oxidizing NADH in the process. In Arabidopsis thaliana (Mouse-ear cress), this protein is Monodehydroascorbate reductase 2.